Consider the following 617-residue polypeptide: Leucine aminopeptidase 2 (617 aa).

Residues 139 to 141 (QCQ) and 271 to 276 (PYGGME) each bind a peptide. A Zn(2+)-binding site is contributed by histidine 300. Catalysis depends on glutamate 301, which acts as the Proton acceptor. Zn(2+)-binding residues include histidine 304 and glutamate 323. Tyrosine 388 serves as the catalytic Proton donor.

The protein belongs to the peptidase M1 family. Requires Zn(2+) as cofactor.

It localises to the cytoplasm. It is found in the nucleus. It carries out the reaction an epoxide + H2O = an ethanediol. In terms of biological role, aminopeptidase that preferentially cleaves di- and tripeptides. Also has low epoxide hydrolase activity (in vitro). Can hydrolyze the epoxide leukotriene LTA(4) but it forms preferentially 5,6-dihydroxy-7,9,11,14-eicosatetraenoic acid rather than the cytokine leukotriene B(4) as the product compared to the homologous mammalian enzyme (in vitro). This chain is Leucine aminopeptidase 2, found in Aspergillus terreus (strain NIH 2624 / FGSC A1156).